A 342-amino-acid polypeptide reads, in one-letter code: Arginase 1, mitochondrial (342 aa).

The transit peptide at 1 to 22 directs the protein to the mitochondrion; that stretch reads MSRIIGRKGINYIHRLNSASFT. L-ornithine is bound by residues S77 and 96–99; that span reads GSTN. 4 residues coordinate Mn(2+): H161, D185, H187, and D189. Residue 189–191 participates in L-ornithine binding; the sequence is DIY. A substrate-binding site is contributed by 195–197; that stretch reads EGN. Position 224 (S224) interacts with L-ornithine. Mn(2+) is bound by residues D270 and D272. Residue E313 participates in substrate binding.

It belongs to the arginase family. In terms of assembly, forms homohexamers. Mn(2+) serves as cofactor. In terms of tissue distribution, expressed in vasculature of roots, root tips, cotyledons, leaves, cauline leaves, stems, sepals and pollen.

The protein localises to the mitochondrion. The catalysed reaction is L-arginine + H2O = urea + L-ornithine. The enzyme catalyses agmatine + H2O = urea + putrescine. It functions in the pathway nitrogen metabolism; urea cycle; L-ornithine and urea from L-arginine: step 1/1. Its pathway is amine and polyamine biosynthesis; putrescine biosynthesis via agmatine pathway; putrescine from agmatine: step 1/1. Its function is as follows. Catalyzes the hydrolysis of L-arginine to urea and L-ornithine. The latter can be utilized in the urea cycle or as a precursor for the synthesis of both polyamines and proline. Possesses agmatinase activity. Catalyzes the formation of putrescine from agmatine. This chain is Arginase 1, mitochondrial, found in Arabidopsis thaliana (Mouse-ear cress).